Reading from the N-terminus, the 215-residue chain is Probable phosphoglycerate mutase GpmB (215 aa).

Substrate contacts are provided by residues 8-15, 21-22, arginine 58, 82-85, and 151-152; these read RHGETEWN, QG, ELDM, and GI. Residue histidine 9 is the Tele-phosphohistidine intermediate of the active site. The Proton donor/acceptor role is filled by glutamate 82.

Belongs to the phosphoglycerate mutase family. GpmB subfamily.

It carries out the reaction (2R)-2-phosphoglycerate = (2R)-3-phosphoglycerate. Its pathway is carbohydrate degradation; glycolysis; pyruvate from D-glyceraldehyde 3-phosphate: step 3/5. The sequence is that of Probable phosphoglycerate mutase GpmB from Proteus mirabilis (strain HI4320).